The sequence spans 215 residues: Ras-related protein Rab-42 (215 aa).

Positions 19, 21, 22, 23, and 44 each coordinate GTP. Mg(2+) contacts are provided by threonine 23, threonine 44, and aspartate 68. 5 residues coordinate GTP: glycine 71, lysine 128, aspartate 130, alanine 157, and lysine 158. A disordered region spans residues 196 to 215 (HRSPNPRSSSRKQDSGTCQC). S-geranylgeranyl cysteine attachment occurs at residues cysteine 213 and cysteine 215.

It belongs to the small GTPase superfamily. Rab family. Mg(2+) serves as cofactor.

Its subcellular location is the membrane. It carries out the reaction GTP + H2O = GDP + phosphate + H(+). With respect to regulation, regulated by guanine nucleotide exchange factors (GEFs) which promote the exchange of bound GDP for free GTP. Regulated by GTPase activating proteins (GAPs) which increase the GTP hydrolysis activity. Inhibited by GDP dissociation inhibitors (GDIs). Its function is as follows. The small GTPases Rab are key regulators of intracellular membrane trafficking, from the formation of transport vesicles to their fusion with membranes. Rabs cycle between an inactive GDP-bound form and an active GTP-bound form that is able to recruit to membranes different sets of downstream effectors directly responsible for vesicle formation, movement, tethering and fusion. The physiological function of RAB42 remains undefined. In Mus musculus (Mouse), this protein is Ras-related protein Rab-42.